We begin with the raw amino-acid sequence, 1847 residues long: Cilia- and flagella-associated protein 65 (1847 aa).

The helical transmembrane segment at 112 to 132 (FFTIIPQPIFLSPGITLTLPI) threads the bilayer. The 110-residue stretch at 805–914 (DLKLDTHKSI…VHYRIRLVGM (110 aa)) folds into the MSP domain. The stretch at 1457–1483 (QRELMRQYHKELQEWNEEKARQEVEFT) forms a coiled coil. The disordered stretch occupies residues 1668 to 1721 (YEGRKSKEQEEDLFGKMPGGQEDDEEEEEDEEEAEEEEEEIEEEMSKDEEDIDK). Over residues 1688-1720 (QEDDEEEEEDEEEAEEEEEEIEEEMSKDEEDID) the composition is skewed to acidic residues.

This sequence belongs to the CFAP65 family. As to quaternary structure, interacts with CFAP47. In terms of tissue distribution, predominantly expressed in testis. Highly expressed in round and elongating spermatids. Expressed also in certain ciliated organs, such as the brain, lung and kidney.

It is found in the cell projection. The protein resides in the cilium. It localises to the flagellum membrane. The protein localises to the cytoplasmic vesicle. Its subcellular location is the secretory vesicle. It is found in the acrosome membrane. The protein resides in the cytoplasm. Plays a role in flagellar formation and sperm motility. The polypeptide is Cilia- and flagella-associated protein 65 (Mus musculus (Mouse)).